Reading from the N-terminus, the 564-residue chain is Phenylalanine--tRNA ligase beta subunit (564 aa).

Residues 286-362 enclose the B5 domain; the sequence is YFQNTLEVSV…IGRGLDSFKP (77 aa). 4 residues coordinate Mg(2+): D340, D346, E349, and E350.

The protein belongs to the phenylalanyl-tRNA synthetase beta subunit family. Type 2 subfamily. As to quaternary structure, tetramer of two alpha and two beta subunits. Mg(2+) serves as cofactor.

The protein resides in the cytoplasm. The enzyme catalyses tRNA(Phe) + L-phenylalanine + ATP = L-phenylalanyl-tRNA(Phe) + AMP + diphosphate + H(+). This is Phenylalanine--tRNA ligase beta subunit from Borrelia hermsii (strain HS1 / DAH).